Here is a 685-residue protein sequence, read N- to C-terminus: MFRSSEPVSPLDDVVTKATDENLTTENWQYILDVCDEVNNDPENGAKNVITSVTKRLNKKFANTQLYALTLVISLSSNCGSKMQQAIASKAFVKTLMKLANDSAVHKSVKSKVLEVLEQLTDEYKKDPSLRLIEEAYDELSRKKPDLKAPAKPEKHKITEQERQREEEELQMVLALSLSETNTSGSFQQHHQTNSQIQPPVNNSHFATDPHQQQQQQQQQHNQQDYGQQSNNANTNNNAPAVEDPTPTVATVSRVKALYDLNATEPGELSFRKGDIITVLESVFRDWWRGSLRGQVGIFPLNYVMPIAEPTPAEIEKEAQEELSVFSQSRNIEKLLALLSSQDAARLNLAENEELQSLYHSTLAIRPKLVKLIDKYAQRKDDLVELNEKFVKARRVYDDLMEASMPQYGGAAAAGGYAGGAQGGAPAGYPSAQGAPAGYPGTSGTPGTPGYPPQYPPQQQQQQQQQQQQQPPYPVQPLQTHQQQPQQQQQQTPYPVHQYDNTQAHGRQGSTDSGRSQRMYSQGGQGGQGPTDLHPATTGGSGYGFPPQYGGGAPSAPSAPHGGAGGPGGPGGPSAPSGAHSGAPSAPPSHAPAASAPHGYGSPSTAHSAPYGTSPAASAPARHSPYINGTPTSNLGQQSPVTSQSIPIPNNNNLAAPPVQGLYSHGTSPPPPVPNAGPPPSNFYE.

Residues 18–148 enclose the VHS domain; sequence ATDENLTTEN…ELSRKKPDLK (131 aa). Basic and acidic residues predominate over residues 144–166; sequence KPDLKAPAKPEKHKITEQERQRE. 2 disordered regions span residues 144 to 168 and 182 to 247; these read KPDL…REEE and NTSG…DPTP. The UIM domain occupies 165-184; it reads REEEELQMVLALSLSETNTS. A compositionally biased stretch (polar residues) spans 182–206; sequence NTSGSFQQHHQTNSQIQPPVNNSHF. Residues 212–241 show a composition bias toward low complexity; sequence QQQQQQQQQHNQQDYGQQSNNANTNNNAPA. The 60-residue stretch at 250 to 309 folds into the SH3 domain; that stretch reads ATVSRVKALYDLNATEPGELSFRKGDIITVLESVFRDWWRGSLRGQVGIFPLNYVMPIAE. Composition is skewed to low complexity over residues 432 to 448 and 457 to 498; these read AQGA…TPGT and PQQQ…PVHQ. The segment at 432–685 is disordered; the sequence is AQGAPAGYPG…AGPPPSNFYE (254 aa). The segment covering 499–522 has biased composition (polar residues); that stretch reads YDNTQAHGRQGSTDSGRSQRMYSQ. Composition is skewed to gly residues over residues 539–553 and 562–572; these read GGSG…GGGA and GGAGGPGGPGG. 2 stretches are compositionally biased toward low complexity: residues 574–584 and 591–604; these read SAPSGAHSGAP and APAA…GSPS. Residues 627-645 show a composition bias toward polar residues; it reads INGTPTSNLGQQSPVTSQS. Positions 646–658 are enriched in low complexity; that stretch reads IPIPNNNNLAAPP. Positions 668–685 are enriched in pro residues; the sequence is SPPPPVPNAGPPPSNFYE.

This sequence belongs to the STAM family. As to quaternary structure, component of the ESCRT-0 complex composed of HSE1 and VPS27.

The protein resides in the endosome membrane. Functionally, component of the ESCRT-0 complex which is the sorting receptor for ubiquitinated cargo proteins at the multivesicular body (MVB). This chain is Class E vacuolar protein-sorting machinery protein HSE1 (HSE1), found in Yarrowia lipolytica (strain CLIB 122 / E 150) (Yeast).